The chain runs to 178 residues: MPAAYIKSVIKTVPDYPKPGILFRDVTSILEDHKAYTTSIELLVKEFAPYNFDKVAGTEARGFLFGAPLAIELGIGFIPVRKPNKLPRKVISESYDLEYGTDCLEIHEDAVKPGEKVLMLDDLLATGGTMIATANLIRRLGGIVEHAGFVISLPDLGGEAKLQEIGVQSHSICEFEGE.

Belongs to the purine/pyrimidine phosphoribosyltransferase family. In terms of assembly, homodimer.

The protein localises to the cytoplasm. The catalysed reaction is AMP + diphosphate = 5-phospho-alpha-D-ribose 1-diphosphate + adenine. Its pathway is purine metabolism; AMP biosynthesis via salvage pathway; AMP from adenine: step 1/1. Functionally, catalyzes a salvage reaction resulting in the formation of AMP, that is energically less costly than de novo synthesis. In Pseudoalteromonas atlantica (strain T6c / ATCC BAA-1087), this protein is Adenine phosphoribosyltransferase.